The chain runs to 125 residues: Glycine cleavage system H protein (125 aa).

A Lipoyl-binding domain is found at 19–101 (GAVVGITDFA…NGSGWFFKLT (83 aa)). Lysine 60 bears the N6-lipoyllysine mark.

This sequence belongs to the GcvH family. In terms of assembly, the glycine cleavage system is composed of four proteins: P, T, L and H. It depends on (R)-lipoate as a cofactor.

Its function is as follows. The glycine cleavage system catalyzes the degradation of glycine. The H protein shuttles the methylamine group of glycine from the P protein to the T protein. The polypeptide is Glycine cleavage system H protein (Methylocella silvestris (strain DSM 15510 / CIP 108128 / LMG 27833 / NCIMB 13906 / BL2)).